Reading from the N-terminus, the 481-residue chain is Exodeoxyribonuclease I (481 aa).

The Exonuclease domain maps to 12 to 193 (LFYDYETFGK…SSDVYATMNI (182 aa)). 3 residues coordinate Mg(2+): Asp15, Glu17, and Asp186. Residue Glu17 coordinates substrate. The 149-residue stretch at 202–350 (PKLFNFFFKY…KLKKFLCSIA (149 aa)) folds into the ExoI SH3-like domain. An ExoI C-terminal domain is found at 356–471 (NGSNVDLKMY…ELFEYVKYTR (116 aa)).

In terms of assembly, monomer. Interacts with ssb (via C-terminus); this interaction stimulates the exonuclease activity by recruiting the enzyme to its substrate. It depends on Mg(2+) as a cofactor.

The catalysed reaction is Exonucleolytic cleavage in the 3'- to 5'-direction to yield nucleoside 5'-phosphates.. Functionally, degrades single-stranded DNA (ssDNA) in a highly processive manner. Also functions as a DNA deoxyribophosphodiesterase that releases deoxyribose-phosphate moieties following the cleavage of DNA at an apurinic/apyrimidinic (AP) site by either an AP endonuclease or AP lyase. The chain is Exodeoxyribonuclease I (sbcB) from Buchnera aphidicola subsp. Baizongia pistaciae (strain Bp).